The following is a 231-amino-acid chain: Cuticle protein LPCP-23 (231 aa).

The first 17 residues, 1–17 (MAFKFVVFAAALAYANA), serve as a signal peptide directing secretion. Repeat copies occupy residues 130 to 133 (AAPV) and 199 to 202 (AAPV).

In terms of biological role, component of the cuticle of Tenebrio molitor. The protein is Cuticle protein LPCP-23 (LPCP-23) of Tenebrio molitor (Yellow mealworm beetle).